The chain runs to 150 residues: Ankyrin repeat protein C18/B24 (150 aa).

The ANK repeat unit spans residues 41–73 (ENKTLLYYAVDVNNIQFAKRLLEYGASVTTSRS).

The sequence is that of Ankyrin repeat protein C18/B24 from Vaccinia virus (strain Copenhagen) (VACV).